A 112-amino-acid polypeptide reads, in one-letter code: Inner membrane assembly complex subunit 17 (112 aa).

The N-terminal 24 residues, 1–24, are a transit peptide targeting the mitochondrion; the sequence is MLRKLPINFAKWTVKKVPVQQKRF. Residues 25 to 44 are Mitochondrial matrix-facing; it reads NSQQKEISPHIMFYKNYARP. The helical transmembrane segment at 45-62 threads the bilayer; that stretch reads LGKVTLFALATYYGLEIV. Residues 63–112 are Mitochondrial intermembrane-facing; that stretch reads WWKLDASEQEAIKNSKLLICESSFSLLTFRRITEFRECEIKTRDLYDPEI.

This sequence belongs to the INA17 family. As to quaternary structure, component of the inner membrane assembly (INA) complex. Interacts with a subset of F(1)F(0)-ATP synthase subunits of the F(1)-domain and the peripheral stalk.

Its subcellular location is the mitochondrion inner membrane. In terms of biological role, component of the INA complex (INAC) that promotes the biogenesis of mitochondrial F(1)F(0)-ATP synthase. INAC facilitates the assembly of the peripheral stalk and promotes the assembly of the catalytic F(1)-domain with the membrane-embedded F(0)-domain. The chain is Inner membrane assembly complex subunit 17 from Schizosaccharomyces pombe (strain 972 / ATCC 24843) (Fission yeast).